The following is a 72-amino-acid chain: Putative transmembrane protein DDB_G0272126 (72 aa).

Transmembrane regions (helical) follow at residues 6 to 26 (KIIK…NTII) and 38 to 58 (IILV…IFYG).

The protein localises to the membrane. In Dictyostelium discoideum (Social amoeba), this protein is Putative transmembrane protein DDB_G0272126.